The chain runs to 271 residues: 3-methyl-2-oxobutanoate hydroxymethyltransferase (271 aa).

Mg(2+) contacts are provided by aspartate 50 and aspartate 89. 3-methyl-2-oxobutanoate contacts are provided by residues 50 to 51 (DS), aspartate 89, and lysine 118. Glutamate 120 serves as a coordination point for Mg(2+). Glutamate 187 functions as the Proton acceptor in the catalytic mechanism.

The protein belongs to the PanB family. In terms of assembly, homodecamer; pentamer of dimers. Mg(2+) is required as a cofactor.

It is found in the cytoplasm. The catalysed reaction is 3-methyl-2-oxobutanoate + (6R)-5,10-methylene-5,6,7,8-tetrahydrofolate + H2O = 2-dehydropantoate + (6S)-5,6,7,8-tetrahydrofolate. It functions in the pathway cofactor biosynthesis; (R)-pantothenate biosynthesis; (R)-pantoate from 3-methyl-2-oxobutanoate: step 1/2. Its function is as follows. Catalyzes the reversible reaction in which hydroxymethyl group from 5,10-methylenetetrahydrofolate is transferred onto alpha-ketoisovalerate to form ketopantoate. The polypeptide is 3-methyl-2-oxobutanoate hydroxymethyltransferase (Campylobacter concisus (strain 13826)).